A 154-amino-acid polypeptide reads, in one-letter code: Large ribosomal subunit protein uL13 (154 aa).

This sequence belongs to the universal ribosomal protein uL13 family. As to quaternary structure, part of the 50S ribosomal subunit.

Its function is as follows. This protein is one of the early assembly proteins of the 50S ribosomal subunit, although it is not seen to bind rRNA by itself. It is important during the early stages of 50S assembly. The chain is Large ribosomal subunit protein uL13 from Rhizobium rhizogenes (strain K84 / ATCC BAA-868) (Agrobacterium radiobacter).